A 245-amino-acid polypeptide reads, in one-letter code: tRNA pseudouridine synthase A (245 aa).

D52 acts as the Nucleophile in catalysis. Y110 contacts substrate.

It belongs to the tRNA pseudouridine synthase TruA family. Homodimer.

The enzyme catalyses uridine(38/39/40) in tRNA = pseudouridine(38/39/40) in tRNA. In terms of biological role, formation of pseudouridine at positions 38, 39 and 40 in the anticodon stem and loop of transfer RNAs. The protein is tRNA pseudouridine synthase A of Pseudothermotoga lettingae (strain ATCC BAA-301 / DSM 14385 / NBRC 107922 / TMO) (Thermotoga lettingae).